We begin with the raw amino-acid sequence, 238 residues long: Small ribosomal subunit protein uS3 (238 aa).

A KH type-2 domain is found at 39–107; the sequence is MREFIHDYAK…ELHLNIVEIR (69 aa). The segment covering 212 to 222 has biased composition (basic and acidic residues); that stretch reads PQAHDRRHSEA. The segment at 212 to 238 is disordered; the sequence is PQAHDRRHSEAQEGAAPRPPRRDRERA.

It belongs to the universal ribosomal protein uS3 family. Part of the 30S ribosomal subunit. Forms a tight complex with proteins S10 and S14.

Its function is as follows. Binds the lower part of the 30S subunit head. Binds mRNA in the 70S ribosome, positioning it for translation. The polypeptide is Small ribosomal subunit protein uS3 (Cereibacter sphaeroides (strain ATCC 17029 / ATH 2.4.9) (Rhodobacter sphaeroides)).